A 1016-amino-acid chain; its full sequence is MQVSRRQFFKICAGGMAGTTAAALGFAPSVALAETRQYKLLRTRETRNTCTYCSVGCGLLMYSLGDGAKNAKASIFHIEGDPDHPVNRGALCPKGAGLVDFIHSESRLKFPEYRAPGSDKWQQISWEEAFDRIAKLMKEDRDANYIAQNAEGVTVNRWLSTGMLCASASSNETGYLTQKFSRALGMLAVDNQARVUHGPTVASLAPTFGRGAMTNHWVDIKNANLVVVMGGNAAEAHPVGFRWAMEAKIHNGAKLIVIDPRFTRTAAVADYYAPIRSGTDIAFLSGVLLYLLNNEKFNREYTEAYTNASLIVREDYGFEDGLFTGYDAEKRKYDKSSWTYELDENGFAKRDTTLQHPRCVWNLLKQHVSRYTPDVVENICGTPKDAFLKVCEYIAETSAHDKTASFLYALGWTQHSVGAQNIRTMAMIQLLLGNMGMAGGGVNALRGHSNIQGLTDLGLLSQSLPGYMTLPSEKQTDLQTYLTANTPKPLLEGQVNYWGNYPKFFVSMMKAFFGDKATAENSWGFDWLPKWDKGYDVLQYFEMMKEGKVNGYICQGFNPVASFPNKNKVIGCLSKLKFLVTIDPLNTETSNFWQNHGELNEVDSSKIQTEVFRLPSTCFAEENGSIVNSGRWLQWHWKGADAPGIALTDGEILSGIFLRLRKMYAEQGGANPDQVLNMTWNYAIPHEPSSEEVAMESNGKALADITDPATGAVIVKKGQQLSSFAQLRDDGTTSCGCWIFAGSWTPEGNQMARRDNADPSGLGNTLGWAWAWPLNRRILYNRASADPQGNPWDPKRQLLKWDGTKWTGWDIPDYSAAPPGSGVGPFIMQQEGMGRLFALDKMAEGPFPEHYEPFETPLGTNPLHPNVISNPAARIFKDDAEALGKADKFPYVGTTYRLTEHFHYWTKHALLNAILQPEQFVEIGESLANKLGIAQGDTVKVSSNRGYIKAKAVVTKRIRTLKANGKDIDTIGIPIHWGYEGVAKKGFIANTLTPFVGDANTQTPEFKSFLVNVEKV.

A signal peptide (tat-type signal) is located at residues 1–33 (MQVSRRQFFKICAGGMAGTTAAALGFAPSVALA). The region spanning 43 to 106 (TRETRNTCTY…GLVDFIHSES (64 aa)) is the 4Fe-4S Mo/W bis-MGD-type domain. The [4Fe-4S] cluster site is built by Cys-50, Cys-53, Cys-57, and Cys-92. Sec-196 is a non-standard amino acid (selenocysteine).

Belongs to the prokaryotic molybdopterin-containing oxidoreductase family. In terms of assembly, formate dehydrogenase is a membrane-bound complex, formed by subunits alpha, beta and gamma. It depends on Mo-bis(molybdopterin guanine dinucleotide) as a cofactor. [4Fe-4S] cluster serves as cofactor. Post-translationally, exported by the Tat system. The position of the signal peptide cleavage has not been experimentally proven.

Its subcellular location is the periplasm. It carries out the reaction formate + NAD(+) = CO2 + NADH. In terms of biological role, allows to use formate as major electron donor during aerobic respiration. Subunit alpha possibly forms the active site. The protein is Formate dehydrogenase-O major subunit (fdoG) of Escherichia coli (strain K12).